The following is a 112-amino-acid chain: Putative pterin-4-alpha-carbinolamine dehydratase (112 aa).

This sequence belongs to the pterin-4-alpha-carbinolamine dehydratase family.

It catalyses the reaction (4aS,6R)-4a-hydroxy-L-erythro-5,6,7,8-tetrahydrobiopterin = (6R)-L-erythro-6,7-dihydrobiopterin + H2O. The sequence is that of Putative pterin-4-alpha-carbinolamine dehydratase from Shewanella amazonensis (strain ATCC BAA-1098 / SB2B).